The sequence spans 432 residues: Trigger factor (432 aa).

Residues 161–246 (EDRVTIDFTG…LKKVEERELP (86 aa)) enclose the PPIase FKBP-type domain.

The protein belongs to the FKBP-type PPIase family. Tig subfamily. As to quaternary structure, homodimer and monomer. In vivo most of the ribosomes are in complex with monomeric TF. Uncomplexed TF, however, is in a monomer-dimer equilibrium with approximately two thirds of TF existing in a dimeric state.

The protein resides in the cytoplasm. It catalyses the reaction [protein]-peptidylproline (omega=180) = [protein]-peptidylproline (omega=0). Involved in protein export. Acts as a chaperone by maintaining the newly synthesized protein in an open conformation. Functions as a peptidyl-prolyl cis-trans isomerase. This chain is Trigger factor, found in Shigella boydii serotype 18 (strain CDC 3083-94 / BS512).